The sequence spans 368 residues: Alcohol dehydrogenase 6 (368 aa).

Phosphoserine is present on S23. Zn(2+)-binding residues include C47, H69, C99, C102, C105, C113, and C175. Residues 200 to 205 (GLGGVG), D224, K229, and 293 to 295 (VGV) contribute to the NAD(+) site.

It belongs to the zinc-containing alcohol dehydrogenase family. Class-V subfamily. Dimer. Zn(2+) serves as cofactor. As to expression, stomach and liver.

The protein resides in the cytoplasm. It catalyses the reaction a primary alcohol + NAD(+) = an aldehyde + NADH + H(+). It carries out the reaction a secondary alcohol + NAD(+) = a ketone + NADH + H(+). Inhibited partially by pyrazole (10 mM) in the reaction mixture containing 100 mM ethanol at pH 10.0. Its function is as follows. Alcohol dehydrogenase. Catalyzes the NAD-dependent oxidation of primary alcohols to the corresponding aldehydes. Oxidizes secondary alcohols to the corresponding ketones. This chain is Alcohol dehydrogenase 6 (ADH6), found in Homo sapiens (Human).